We begin with the raw amino-acid sequence, 2299 residues long: Protein Ycf2 (2299 aa).

An ATP-binding site is contributed by 1642 to 1649; sequence GSIGTGRS.

Belongs to the Ycf2 family.

The protein localises to the plastid. Its subcellular location is the chloroplast stroma. Functionally, probable ATPase of unknown function. Its presence in a non-photosynthetic plant (Epifagus virginiana) and experiments in tobacco indicate that it has an essential function which is probably not related to photosynthesis. The sequence is that of Protein Ycf2 from Nandina domestica (Heavenly bamboo).